The sequence spans 467 residues: Cytochrome P450 85A3 (467 aa).

A helical membrane pass occupies residues 2–22 (AIFLIIFVVFFGFCILSTPLF). Position 417 (Cys417) interacts with heme.

Belongs to the cytochrome P450 family. Heme serves as cofactor. As to expression, expressed in fruits.

The protein localises to the membrane. The enzyme catalyses 6-deoxocastasterone + reduced [NADPH--hemoprotein reductase] + O2 = 6alpha-hydroxycastasterone + oxidized [NADPH--hemoprotein reductase] + H2O + H(+). The catalysed reaction is 6alpha-hydroxycastasterone + reduced [NADPH--hemoprotein reductase] + O2 = castasterone + oxidized [NADPH--hemoprotein reductase] + 2 H2O + H(+). It carries out the reaction castasterone + reduced [NADPH--hemoprotein reductase] + O2 = brassinolide + oxidized [NADPH--hemoprotein reductase] + H2O + H(+). It catalyses the reaction 6-deoxocastasterone + 2 reduced [NADPH--hemoprotein reductase] + 2 O2 = castasterone + 2 oxidized [NADPH--hemoprotein reductase] + 3 H2O + 2 H(+). The protein operates within plant hormone biosynthesis; brassinosteroid biosynthesis. Its function is as follows. Catalyzes the C6-oxidation step in brassinosteroids biosynthesis. Converts 6-deoxocastasterone (6-deoxoCS) to castasterone (CS), and castasterone (CS) to brassinolide (BL). The polypeptide is Cytochrome P450 85A3 (Solanum lycopersicum (Tomato)).